Reading from the N-terminus, the 340-residue chain is Immunoglobulin-binding protein 1 (340 aa).

Residues leucine 47 to aspartate 61 form the UIM domain. Residues arginine 99–glycine 203 form an interaction with PPP2CA region. Disordered regions lie at residues aspartate 221–lysine 242 and leucine 281–glycine 340. Positions arginine 226–serine 291 are interaction with MID1. At lysine 242 the chain carries N6-acetyllysine. Residues alanine 292–glutamine 301 are compositionally biased toward low complexity. Residues glutamate 302–glutamate 312 show a composition bias toward acidic residues. A compositionally biased stretch (basic and acidic residues) spans glutamate 313 to proline 330.

This sequence belongs to the IGBP1/TAP42 family. Interacts with partially folded PPP2CA, but not with the fully active protein. Interacts with PPP2CB, and with PP4 and PP6. Interacts with MID1 and MID2. Interacts with ubiquitin. In terms of processing, phosphorylated. Post-translationally, monoubiquitination by MID1 triggers calpain-mediated cleavage and switches IGBP1 activity from protective to destructive.

The protein resides in the cytoplasm. Its function is as follows. Associated to surface IgM-receptor; may be involved in signal transduction. Involved in regulation of the catalytic activity of the phosphatases PP2A, PP4 and PP6 by protecting their partially folded catalytic subunits from degradative polyubiquitination until they associate with regulatory subunits. This Rattus norvegicus (Rat) protein is Immunoglobulin-binding protein 1 (Igbp1).